A 577-amino-acid polypeptide reads, in one-letter code: Sulfite reductase [NADPH] hemoprotein beta-component (577 aa).

Residues Cys-441, Cys-447, Cys-486, and Cys-490 each contribute to the [4Fe-4S] cluster site. Cys-490 is a siroheme binding site.

It belongs to the nitrite and sulfite reductase 4Fe-4S domain family. In terms of assembly, alpha(8)-beta(8). The alpha component is a flavoprotein, the beta component is a hemoprotein. Siroheme is required as a cofactor. The cofactor is [4Fe-4S] cluster.

The catalysed reaction is hydrogen sulfide + 3 NADP(+) + 3 H2O = sulfite + 3 NADPH + 4 H(+). It functions in the pathway sulfur metabolism; hydrogen sulfide biosynthesis; hydrogen sulfide from sulfite (NADPH route): step 1/1. Functionally, component of the sulfite reductase complex that catalyzes the 6-electron reduction of sulfite to sulfide. This is one of several activities required for the biosynthesis of L-cysteine from sulfate. In Pectobacterium atrosepticum (strain SCRI 1043 / ATCC BAA-672) (Erwinia carotovora subsp. atroseptica), this protein is Sulfite reductase [NADPH] hemoprotein beta-component.